The following is a 276-amino-acid chain: Diaminopimelate epimerase (276 aa).

Residues Asn11, Gln44, and Asn64 each contribute to the substrate site. Residue Cys73 is the Proton donor of the active site. Substrate contacts are provided by residues 74 to 75 (GN), Asn157, Asn190, and 208 to 209 (ER). Cys217 serves as the catalytic Proton acceptor. 218–219 (GS) is a binding site for substrate.

This sequence belongs to the diaminopimelate epimerase family. As to quaternary structure, homodimer.

Its subcellular location is the cytoplasm. It catalyses the reaction (2S,6S)-2,6-diaminopimelate = meso-2,6-diaminopimelate. The protein operates within amino-acid biosynthesis; L-lysine biosynthesis via DAP pathway; DL-2,6-diaminopimelate from LL-2,6-diaminopimelate: step 1/1. In terms of biological role, catalyzes the stereoinversion of LL-2,6-diaminopimelate (L,L-DAP) to meso-diaminopimelate (meso-DAP), a precursor of L-lysine and an essential component of the bacterial peptidoglycan. In Blochmanniella floridana, this protein is Diaminopimelate epimerase.